The primary structure comprises 341 residues: Tetraacyldisaccharide 4'-kinase (341 aa).

54 to 61 (TVGGAGKT) contributes to the ATP binding site.

It belongs to the LpxK family.

It catalyses the reaction a lipid A disaccharide + ATP = a lipid IVA + ADP + H(+). It participates in glycolipid biosynthesis; lipid IV(A) biosynthesis; lipid IV(A) from (3R)-3-hydroxytetradecanoyl-[acyl-carrier-protein] and UDP-N-acetyl-alpha-D-glucosamine: step 6/6. Functionally, transfers the gamma-phosphate of ATP to the 4'-position of a tetraacyldisaccharide 1-phosphate intermediate (termed DS-1-P) to form tetraacyldisaccharide 1,4'-bis-phosphate (lipid IVA). In Brucella ovis (strain ATCC 25840 / 63/290 / NCTC 10512), this protein is Tetraacyldisaccharide 4'-kinase.